We begin with the raw amino-acid sequence, 199 residues long: MAP6 domain-containing protein 1 (199 aa).

3 S-palmitoyl cysteine lipidation sites follow: Cys5, Cys10, and Cys11. The interval 33-110 (YSDLDSEEPG…SAQSSAPPAP (78 aa)) is disordered. Phosphoserine is present on Ser38. 2 mn regions span residues 130-143 (TTSY…WTGV) and 165-177 (DSSP…VPEV). Position 167 is a phosphoserine (Ser167).

It belongs to the STOP family. As to quaternary structure, interacts with calmodulin. Palmitoylated. Palmitoylation enhances association with microtubules.

It localises to the golgi apparatus. The protein resides in the cytoplasm. The protein localises to the cytoskeleton. In terms of biological role, may have microtubule-stabilizing activity. The sequence is that of MAP6 domain-containing protein 1 (MAP6D1) from Homo sapiens (Human).